The sequence spans 244 residues: Lipoprotein-releasing system ATP-binding protein LolD (244 aa).

Residues Ile-19–Val-244 form the ABC transporter domain. Position 55 to 62 (Gly-55 to Ser-62) interacts with ATP.

It belongs to the ABC transporter superfamily. Lipoprotein translocase (TC 3.A.1.125) family. The complex is composed of two ATP-binding proteins (LolD) and two transmembrane proteins (LolC and LolE).

It localises to the cell inner membrane. Functionally, part of the ABC transporter complex LolCDE involved in the translocation of mature outer membrane-directed lipoproteins, from the inner membrane to the periplasmic chaperone, LolA. Responsible for the formation of the LolA-lipoprotein complex in an ATP-dependent manner. The protein is Lipoprotein-releasing system ATP-binding protein LolD of Xanthomonas euvesicatoria pv. vesicatoria (strain 85-10) (Xanthomonas campestris pv. vesicatoria).